Here is a 748-residue protein sequence, read N- to C-terminus: Cytosolic phospholipase A2 (748 aa).

A phospholipid binding region spans residues 1-178 (MSFIDPYQHI…MKSFLGEENS (178 aa)). The 119-residue stretch at 6–124 (PYQHIVVEHQ…GEKKEVQLTF (119 aa)) folds into the C2 domain. Ca(2+) is bound by residues aspartate 40, threonine 41, aspartate 43, asparagine 65, aspartate 93, alanine 94, and asparagine 95. A PLA2c domain is found at 138–740 (VCSSTDLRFS…SSVEARRFFN (603 aa)). Serine 228 functions as the Nucleophile in the catalytic mechanism. Residues 431–459 (SNDSSDSEDESQHPKGTENSEANEEYQNS) form a disordered region. The span at 449–459 (NSEANEEYQNS) shows a compositional bias: polar residues. At serine 505 the chain carries Phosphoserine; by MAPK. Aspartate 549 acts as the Proton acceptor in catalysis.

Post-translationally, activated by phosphorylation on a serine residue.

It localises to the cytoplasm. The protein resides in the cytoplasmic vesicle. The catalysed reaction is a 1,2-diacyl-sn-glycero-3-phosphocholine + H2O = a 1-acyl-sn-glycero-3-phosphocholine + a fatty acid + H(+). The enzyme catalyses a 1-acyl-sn-glycero-3-phosphocholine + H2O = sn-glycerol 3-phosphocholine + a fatty acid + H(+). Its activity is regulated as follows. Stimulated by agonists such as ATP, EGF, thrombin and bradykinin as well as by cytosolic Ca(2+). Functionally, selectively hydrolyzes arachidonyl phospholipids in the sn-2 position releasing arachidonic acid. Together with its lysophospholipid activity, it is implicated in the initiation of the inflammatory response. This Gallus gallus (Chicken) protein is Cytosolic phospholipase A2 (PLA2G4A).